The following is a 151-amino-acid chain: Ribosome maturation factor RimP (151 aa).

This sequence belongs to the RimP family.

Its subcellular location is the cytoplasm. In terms of biological role, required for maturation of 30S ribosomal subunits. The sequence is that of Ribosome maturation factor RimP from Shewanella sediminis (strain HAW-EB3).